The following is a 248-amino-acid chain: UPF0280 protein Maeo_0343 (248 aa).

The protein belongs to the UPF0280 family.

This Methanococcus aeolicus (strain ATCC BAA-1280 / DSM 17508 / OCM 812 / Nankai-3) protein is UPF0280 protein Maeo_0343.